The chain runs to 481 residues: Glutamyl-tRNA(Gln) amidotransferase subunit A (481 aa).

Active-site charge relay system residues include Lys74 and Ser149. The Acyl-ester intermediate role is filled by Ser173.

The protein belongs to the amidase family. GatA subfamily. In terms of assembly, heterotrimer of A, B and C subunits.

It carries out the reaction L-glutamyl-tRNA(Gln) + L-glutamine + ATP + H2O = L-glutaminyl-tRNA(Gln) + L-glutamate + ADP + phosphate + H(+). In terms of biological role, allows the formation of correctly charged Gln-tRNA(Gln) through the transamidation of misacylated Glu-tRNA(Gln) in organisms which lack glutaminyl-tRNA synthetase. The reaction takes place in the presence of glutamine and ATP through an activated gamma-phospho-Glu-tRNA(Gln). In Francisella tularensis subsp. holarctica (strain FTNF002-00 / FTA), this protein is Glutamyl-tRNA(Gln) amidotransferase subunit A.